The sequence spans 472 residues: Ribulose bisphosphate carboxylase large chain 1 (472 aa).

Positions 115 and 165 each coordinate substrate. The active-site Proton acceptor is the Lys-167. Lys-169 contacts substrate. Residues Lys-193, Asp-195, and Glu-196 each coordinate Mg(2+). Lys-193 is subject to N6-carboxylysine. The active-site Proton acceptor is the His-286. Substrate contacts are provided by Arg-287, His-319, and Ser-371.

The protein belongs to the RuBisCO large chain family. Type I subfamily. In terms of assembly, heterohexadecamer of 8 large chains and 8 small chains. Mg(2+) is required as a cofactor.

It catalyses the reaction 2 (2R)-3-phosphoglycerate + 2 H(+) = D-ribulose 1,5-bisphosphate + CO2 + H2O. The enzyme catalyses D-ribulose 1,5-bisphosphate + O2 = 2-phosphoglycolate + (2R)-3-phosphoglycerate + 2 H(+). In terms of biological role, ruBisCO catalyzes two reactions: the carboxylation of D-ribulose 1,5-bisphosphate, the primary event in carbon dioxide fixation, as well as the oxidative fragmentation of the pentose substrate. Both reactions occur simultaneously and in competition at the same active site. The sequence is that of Ribulose bisphosphate carboxylase large chain 1 from Hydrogenovibrio marinus.